The primary structure comprises 126 residues: Fluoride-specific ion channel FluC (126 aa).

The next 4 helical transmembrane spans lie at 4–24 (PLLS…FLGL), 33–53 (IPLG…FAMA), 67–87 (FVIT…IEIV), and 97–117 (MAML…CLGL). Positions 74 and 77 each coordinate Na(+).

The protein belongs to the fluoride channel Fluc/FEX (TC 1.A.43) family.

The protein localises to the cell inner membrane. It catalyses the reaction fluoride(in) = fluoride(out). Na(+) is not transported, but it plays an essential structural role and its presence is essential for fluoride channel function. In terms of biological role, fluoride-specific ion channel. Important for reducing fluoride concentration in the cell, thus reducing its toxicity. This is Fluoride-specific ion channel FluC from Acinetobacter baumannii (strain SDF).